A 479-amino-acid polypeptide reads, in one-letter code: Aspartyl/glutamyl-tRNA(Asn/Gln) amidotransferase subunit B (479 aa).

This sequence belongs to the GatB/GatE family. GatB subfamily. Heterotrimer of A, B and C subunits.

It catalyses the reaction L-glutamyl-tRNA(Gln) + L-glutamine + ATP + H2O = L-glutaminyl-tRNA(Gln) + L-glutamate + ADP + phosphate + H(+). The enzyme catalyses L-aspartyl-tRNA(Asn) + L-glutamine + ATP + H2O = L-asparaginyl-tRNA(Asn) + L-glutamate + ADP + phosphate + 2 H(+). Allows the formation of correctly charged Asn-tRNA(Asn) or Gln-tRNA(Gln) through the transamidation of misacylated Asp-tRNA(Asn) or Glu-tRNA(Gln) in organisms which lack either or both of asparaginyl-tRNA or glutaminyl-tRNA synthetases. The reaction takes place in the presence of glutamine and ATP through an activated phospho-Asp-tRNA(Asn) or phospho-Glu-tRNA(Gln). This is Aspartyl/glutamyl-tRNA(Asn/Gln) amidotransferase subunit B from Mesoplasma florum (strain ATCC 33453 / NBRC 100688 / NCTC 11704 / L1) (Acholeplasma florum).